A 396-amino-acid polypeptide reads, in one-letter code: Tryptophan synthase beta chain (396 aa).

K88 is modified (N6-(pyridoxal phosphate)lysine).

It belongs to the TrpB family. In terms of assembly, tetramer of two alpha and two beta chains. Requires pyridoxal 5'-phosphate as cofactor.

The catalysed reaction is (1S,2R)-1-C-(indol-3-yl)glycerol 3-phosphate + L-serine = D-glyceraldehyde 3-phosphate + L-tryptophan + H2O. It participates in amino-acid biosynthesis; L-tryptophan biosynthesis; L-tryptophan from chorismate: step 5/5. The beta subunit is responsible for the synthesis of L-tryptophan from indole and L-serine. The chain is Tryptophan synthase beta chain from Shewanella sp. (strain W3-18-1).